A 191-amino-acid chain; its full sequence is NADH-quinone oxidoreductase subunit B 2 (191 aa).

[4Fe-4S] cluster-binding residues include Cys69, Cys70, Cys134, and Cys164.

The protein belongs to the complex I 20 kDa subunit family. In terms of assembly, NDH-1 is composed of 14 different subunits. Subunits NuoB, C, D, E, F, and G constitute the peripheral sector of the complex. [4Fe-4S] cluster is required as a cofactor.

The protein localises to the cell inner membrane. The enzyme catalyses a quinone + NADH + 5 H(+)(in) = a quinol + NAD(+) + 4 H(+)(out). Functionally, NDH-1 shuttles electrons from NADH, via FMN and iron-sulfur (Fe-S) centers, to quinones in the respiratory chain. Couples the redox reaction to proton translocation (for every two electrons transferred, four hydrogen ions are translocated across the cytoplasmic membrane), and thus conserves the redox energy in a proton gradient. This chain is NADH-quinone oxidoreductase subunit B 2, found in Gluconacetobacter diazotrophicus (strain ATCC 49037 / DSM 5601 / CCUG 37298 / CIP 103539 / LMG 7603 / PAl5).